Consider the following 125-residue polypeptide: Holo-[acyl-carrier-protein] synthase (125 aa).

Mg(2+) is bound by residues aspartate 8 and glutamate 57.

This sequence belongs to the P-Pant transferase superfamily. AcpS family. Requires Mg(2+) as cofactor.

The protein resides in the cytoplasm. The enzyme catalyses apo-[ACP] + CoA = holo-[ACP] + adenosine 3',5'-bisphosphate + H(+). Its function is as follows. Transfers the 4'-phosphopantetheine moiety from coenzyme A to a Ser of acyl-carrier-protein. This chain is Holo-[acyl-carrier-protein] synthase, found in Laribacter hongkongensis (strain HLHK9).